The primary structure comprises 712 residues: Amino-acid acetyltransferase, mitochondrial (712 aa).

The N-terminal 47 residues, 1-47, are a transit peptide targeting the mitochondrion; sequence MFVRTCRSSCNAWTNATSTTQAGSLLPPNAHRSVVLTLSLQACSART. The disordered stretch occupies residues 55–99; it reads FASTTSQSKRQEAEAEEKRQVSPRLGPSAPRSSYPSSAEARQKRD. Residues 63-74 show a composition bias toward basic and acidic residues; it reads KRQEAEAEEKRQ. A compositionally biased stretch (low complexity) spans 81-93; that stretch reads PSAPRSSYPSSAE. An N-acetyltransferase domain is found at 534–702; that stretch reads GVPRLRLTDT…YEDVCRNIAP (169 aa).

This sequence belongs to the acetyltransferase family.

Its subcellular location is the mitochondrion. It carries out the reaction L-glutamate + acetyl-CoA = N-acetyl-L-glutamate + CoA + H(+). The protein operates within amino-acid biosynthesis; L-arginine biosynthesis; N(2)-acetyl-L-ornithine from L-glutamate: step 1/4. Inhibited by arginine. Its function is as follows. N-acetylglutamate synthase involved in arginine biosynthesis. The sequence is that of Amino-acid acetyltransferase, mitochondrial (arg-14) from Neurospora crassa (strain ATCC 24698 / 74-OR23-1A / CBS 708.71 / DSM 1257 / FGSC 987).